The sequence spans 87 residues: Potassium channel toxin Tdi-beta-KTx (87 aa).

The first 19 residues, 1–19 (MERKLALLLLLGMITLASS), serve as a signal peptide directing secretion. A propeptide spanning residues 20–27 (GLREKHVQ) is cleaved from the precursor. The BetaSPN-type CS-alpha/beta domain occupies 53–87 (QFGCPAYEGYCMNHCQDIERHDGSCHGFKCKCEKS). 3 disulfides stabilise this stretch: C56-C77, C63-C82, and C67-C84.

Expressed by the venom gland.

The protein localises to the secreted. In terms of biological role, inhibits voltage-gated potassium channel. This Tityus discrepans (Venezuelan scorpion) protein is Potassium channel toxin Tdi-beta-KTx.